We begin with the raw amino-acid sequence, 225 residues long: Enolase-phosphatase E1 (225 aa).

It belongs to the HAD-like hydrolase superfamily. MasA/MtnC family. In terms of assembly, monomer. It depends on Mg(2+) as a cofactor.

The enzyme catalyses 5-methylsulfanyl-2,3-dioxopentyl phosphate + H2O = 1,2-dihydroxy-5-(methylsulfanyl)pent-1-en-3-one + phosphate. It participates in amino-acid biosynthesis; L-methionine biosynthesis via salvage pathway; L-methionine from S-methyl-5-thio-alpha-D-ribose 1-phosphate: step 3/6. It functions in the pathway amino-acid biosynthesis; L-methionine biosynthesis via salvage pathway; L-methionine from S-methyl-5-thio-alpha-D-ribose 1-phosphate: step 4/6. Functionally, bifunctional enzyme that catalyzes the enolization of 2,3-diketo-5-methylthiopentyl-1-phosphate (DK-MTP-1-P) into the intermediate 2-hydroxy-3-keto-5-methylthiopentenyl-1-phosphate (HK-MTPenyl-1-P), which is then dephosphorylated to form the acireductone 1,2-dihydroxy-3-keto-5-methylthiopentene (DHK-MTPene). The polypeptide is Enolase-phosphatase E1 (Shewanella woodyi (strain ATCC 51908 / MS32)).